Consider the following 413-residue polypeptide: Hibernation-specific plasma protein HP-55 (413 aa).

The N-terminal stretch at 1–24 (MPSSISWGLLLLAALSCLGPGSLA) is a signal peptide. Position 25 is a pyrrolidone carboxylic acid (Q25). N65, N102, N165, and N266 each carry an N-linked (GlcNAc...) asparagine glycan. The RCL stretch occupies residues 368–387 (GGTVLGAEAMLQAPIMKFDR).

This sequence belongs to the serpin family. Plasma proteins HP-20, HP-25, HP-27 and HP-55 form a 140 kDa complex via disulfide bonds in the plasma. Post-translationally, the N-terminus is blocked. Plasma; synthesized in the liver.

The protein resides in the secreted. Its function is as follows. Protease inhibitor. In Tamias sibiricus (Siberian chipmunk), this protein is Hibernation-specific plasma protein HP-55.